Here is a 463-residue protein sequence, read N- to C-terminus: Formate-nitrite transporter 2 (463 aa).

The Cytoplasmic segment spans residues 1–100 (MCSIPPLRLL…VKKTQLRIDR (100 aa)). The chain crosses the membrane as a helical span at residues 101–121 (LLLQAFMAGIFVAMAGHCCTV). The Extracellular portion of the chain corresponds to 122-142 (LAGSYPTDPGDPLAVAKPTQK). Residues 143-163 (FIYGALFPVAFICIILTGAEL) traverse the membrane as a helical segment. Residues 164–189 (FTGNTMTMLICYFQKRVTMLQLGVNW) are Cytoplasmic-facing. Residues 190–210 (LGSLAGNWLGALFGAYFLSYL) form a helical membrane-spanning segment. The Extracellular portion of the chain corresponds to 211–237 (TGALGDEHVRQFLFRTCVNKISYGWGE). Residues 238 to 258 (CFLRGVGCNTFVCLAVWAVIA) form a helical membrane-spanning segment. At 259 to 265 (SENVAGK) the chain is on the cytoplasmic side. A helical membrane pass occupies residues 266-286 (VLVMWFPIVAFCVGGYEHIIA). Residues 287–305 (NMYTLQAGLMAGAPVAILD) are Extracellular-facing. A helical transmembrane segment spans residues 306–326 (VIAFNFLPTLLGNIVGGCLLV). At 327–463 (GAVYAYNFYP…QTAESVAQQV (137 aa)) the chain is on the cytoplasmic side. Residues 424 to 463 (SGNLSTHARLDLPNRPVEPPSDGLEVTPQSQTAESVAQQV) form a disordered region. The span at 450-463 (TPQSQTAESVAQQV) shows a compositional bias: polar residues.

Belongs to the FNT transporter (TC 1.A.16) family. As to quaternary structure, homopentamer.

It localises to the cell membrane. The enzyme catalyses (S)-lactate(in) + H(+)(in) = (S)-lactate(out) + H(+)(out). It catalyses the reaction formate(in) + H(+)(in) = formate(out) + H(+)(out). The catalysed reaction is pyruvate(out) + H(+)(out) = pyruvate(in) + H(+)(in). It carries out the reaction acetate(out) + H(+)(out) = acetate(in) + H(+)(in). With respect to regulation, inhibited by p-chloromercuribenzene sulfonate (pCMBS). Methyl methanethiosulfonate (MMTS) inhibits L-lactate but not formate transport. Inhibited by the Malaria Box compound MMV007839. Inhibited by BH-296, BH-317, BH-326 and BH-388 compounds. Its function is as follows. Monocarboxylate-proton symporter; active in acidic-to-neutral pH range. Transports L-lactate and formate. This chain is Formate-nitrite transporter 2, found in Toxoplasma gondii (strain ATCC 50611 / Me49).